The following is a 373-amino-acid chain: Tomoregulin-1 (373 aa).

A signal peptide spans 1 to 36; that stretch reads MGAQAPLRLPAAPPLAVCGYTSVLLLFAFCLPGSGA. Residues 37 to 323 lie on the Extracellular side of the membrane; that stretch reads SNQPAGGGGD…VPSRQKLTHV (287 aa). A glycan (N-linked (GlcNAc...) asparagine) is linked at N56. One can recognise a Kazal-like 1 domain in the interval 91-138; that stretch reads ACQFQCHTNYIPVCGSNGDTYQNECFLRRAACKHQKDITVVARGPCYS. 3 disulfides stabilise this stretch: C92–C122, C96–C115, and C104–C136. N140 carries N-linked (GlcNAc...) asparagine glycosylation. The disordered stretch occupies residues 140 to 162; that stretch reads NGSGSGEGEEEGSGAGAHRKHSK. Residues 182-230 enclose the Kazal-like 2 domain; it reads VCNIDCSGYSFNPVCASDGSSYNNPCFVREASCIRQEQIDIRHLGHCTD. Cystine bridges form between C183/C214, C187/C207, C196/C228, C268/C281, C276/C292, and C294/C303. The region spanning 264-304 is the EGF-like domain; sequence SHMPCPENLNGYCIHGKCEFIYSTQKASCRCESGYTGQHCE. Residues 324–344 traverse the membrane as a helical segment; that stretch reads LIAAIIGAVQIAIIVAIVMCI. The Cytoplasmic segment spans residues 345–373; it reads TRKCPKNNRGRRQKQNLGHFTSETSSRMV. The segment at 352–373 is disordered; the sequence is NRGRRQKQNLGHFTSETSSRMV. A compositionally biased stretch (polar residues) spans 359 to 373; the sequence is QNLGHFTSETSSRMV.

This sequence belongs to the tomoregulin family. In terms of assembly, may interact with ST14.

The protein localises to the cell membrane. Functionally, neuron-specific restriction factor that prevents herpes simplex virus 1 (HHV-1) infection in the brain by blocking viral entry. Also able to restrict herpes simplex virus 2 (HHV-2) infection, although to a lesser extent. Acts by preventing the association between the viral glycoprotein D (gD) and its cell surface receptor NECTIN1, thereby inhibiting fusion of the virus and the cell membrane. Also able to prevent the association between the viral glycoprotein B (gB) and MYH9/NMMHC-IIA and MYH10/NMMHC-IIB receptors. In Rattus norvegicus (Rat), this protein is Tomoregulin-1 (Tmeff1).